The following is a 373-amino-acid chain: MAKRDYYEVLGVNKSASKDEIKKAYRKLSKKYHPDINKEEGADEKFKEISEAYEVLSDENKRVNYDQFGHDGPQGGFGSQGFGGSDFGGFEDIFSSFFGGGSRQRDPNAPRKGDDLQYTMTITFEEAVFGTKKEISIKKDVTCHTCNGDGAKPGTSKKTCSYCNGAGRVSVEQNTILGRVRTEQVCPKCEGSGQEFEEPCPTCKGKGTENKTVKLEVTVPEGVDNEQQVRLAGEGSPGVNGGPHGDLYVVFRVKPSNTFERDGDDIYYNLDISFSQAALGDEIKIPTLKSNVVLTIPAGTQTGKQFRLKDKGVKNVHGYGYGDLFVNIKVVTPTKLNDRQKELLKEFAEINGENINEQSSNFKDRAKRFFKGE.

Residues 5 to 69 enclose the J domain; that stretch reads DYYEVLGVNK…NKRVNYDQFG (65 aa). Residues 130 to 212 form a CR-type zinc finger; sequence GTKKEISIKK…CKGKGTENKT (83 aa). Positions 143, 146, 160, 163, 186, 189, 200, and 203 each coordinate Zn(2+). CXXCXGXG motif repeat units lie at residues 143–150, 160–167, 186–193, and 200–207; these read CHTCNGDG, CSYCNGAG, CPKCEGSG, and CPTCKGKG.

This sequence belongs to the DnaJ family. Homodimer. Requires Zn(2+) as cofactor.

It localises to the cytoplasm. Participates actively in the response to hyperosmotic and heat shock by preventing the aggregation of stress-denatured proteins and by disaggregating proteins, also in an autonomous, DnaK-independent fashion. Unfolded proteins bind initially to DnaJ; upon interaction with the DnaJ-bound protein, DnaK hydrolyzes its bound ATP, resulting in the formation of a stable complex. GrpE releases ADP from DnaK; ATP binding to DnaK triggers the release of the substrate protein, thus completing the reaction cycle. Several rounds of ATP-dependent interactions between DnaJ, DnaK and GrpE are required for fully efficient folding. Also involved, together with DnaK and GrpE, in the DNA replication of plasmids through activation of initiation proteins. The chain is Chaperone protein DnaJ from Staphylococcus epidermidis (strain ATCC 35984 / DSM 28319 / BCRC 17069 / CCUG 31568 / BM 3577 / RP62A).